Reading from the N-terminus, the 202-residue chain is ADP-ribosylation factor-like protein 15 (202 aa).

GTP contacts are provided by residues 39–46 (GLTGSGKT), 82–86 (ELGGA), and 142–145 (NHQD).

The protein belongs to the small GTPase superfamily. Arf family.

This Bos taurus (Bovine) protein is ADP-ribosylation factor-like protein 15 (ARL15).